A 1725-amino-acid polypeptide reads, in one-letter code: Latrophilin Cirl (1725 aa).

Over 1–757 (MALNELGNCA…LFTMFDGNMR (757 aa)) the chain is Extracellular. Residues 18 to 107 (ACEGKQLTIE…KYLEAHYQCI (90 aa)) form the SUEL-type lectin domain. Asn135 carries an N-linked (GlcNAc...) asparagine glycan. Residues 164–284 (AVQPTHSTPS…SAANNSVNIG (121 aa)) are disordered. Low complexity-rich tracts occupy residues 167–176 (PTHSTPSSST) and 224–236 (SSSSSSNSGSAGN). Asn236, Asn278, Asn326, Asn388, Asn645, Asn693, and Asn720 each carry an N-linked (GlcNAc...) asparagine glycan. Over residues 259–282 (LLTTKSSPNRTPGTTASAANNSVN) the composition is skewed to polar residues. The disordered stretch occupies residues 361-390 (DDEYDDDLPAASSTTPQPSNNGGDCVHNSS). Residues 371–390 (ASSTTPQPSNNGGDCVHNSS) show a composition bias toward polar residues. Residues 551–744 (RNVVQKVKNI…AILMDVVDEH (194 aa)) enclose the GAIN-B domain. 2 disulfide bridges follow: Cys699/Cys726 and Cys714/Cys728. A GPS region spans residues 699-744 (CVFWNYIDHAWSANGCSLESTNRTHSVCSCNHLTNFAILMDVVDEH). The chain crosses the membrane as a helical span at residues 758-778 (IFIYISVAICVVFIIIALLTL). Residues 779–791 (KLFNGVFVKSART) are Cytoplasmic-facing. Residues 792-812 (SIYSSIYICLLAIELLFLLGI) traverse the membrane as a helical segment. At 813 to 818 (EQTETS) the chain is on the extracellular side. A helical membrane pass occupies residues 819–839 (IFCGFITVFLHCAILSGTAWF). The Cytoplasmic segment spans residues 840-865 (CYEAFHSYSTLTSDELLLEVDQTPKV). The chain crosses the membrane as a helical span at residues 866 to 886 (NCYYLLSYGLSLSVVAISLVI). Over 887 to 910 (DPSTYTQNDYCVLMEANALFYSTF) the chain is Extracellular. The helical transmembrane segment at 911 to 931 (VAPVLIFFVAAITYTFLSWII) threads the bilayer. The Cytoplasmic portion of the chain corresponds to 932–958 (MRRKSRTALKTKEHTRLANVRFDIRCS). A helical transmembrane segment spans residues 959–979 (FVFLLLLSVVWCCAYFYLRGA). Over 980–986 (KLDEDGA) the chain is Extracellular. The chain crosses the membrane as a helical span at residues 987–1007 (PIYGYCFICFNTLLGIYIFVF). Residues 1008 to 1725 (HCIQNEKIRR…VRCYLEPLAK (718 aa)) are Cytoplasmic-facing. Residues 1056-1088 (TANQSAGTLSKSKSKLPLGAGDEARDGDAQQQQ) are disordered. Ser1153 is modified (phosphoserine). Disordered stretches follow at residues 1236–1263 (HNNQHGKKKRGGGAGAVPASPSGSLHSR), 1309–1337 (QQLQQQQLRQQRQQQQQQLSSDEEQAEQH), 1472–1555 (GGGS…SDER), and 1636–1705 (LFGH…QARH). The segment covering 1237–1246 (NNQHGKKKRG) has biased composition (basic residues). 2 positions are modified to phosphoserine: Ser1255 and Ser1262. The segment covering 1309–1327 (QQLQQQQLRQQRQQQQQQL) has biased composition (low complexity). A phosphoserine mark is found at Ser1328 and Ser1329. Low complexity predominate over residues 1478–1496 (GGSVTSRSQQQQQQQLKQK). Composition is skewed to acidic residues over residues 1505 to 1522 (DDDDDDDDDDDEYDDEVT) and 1532 to 1543 (CDDEDNESDIDD). The span at 1651–1666 (QTPAQKRQQLQKLSPQ) shows a compositional bias: polar residues. Residues 1667–1683 (STTSSSSHTSHSNPQHA) show a composition bias toward low complexity. The segment covering 1684 to 1693 (PAHHLQHHHT) has biased composition (basic residues). The segment covering 1694-1705 (QQQQQQQQQARH) has biased composition (low complexity).

Belongs to the G-protein coupled receptor 2 family. LN-TM7 subfamily. Forms a heterodimer, consisting of a large extracellular region non-covalently linked to a seven-transmembrane moiety. In terms of processing, proteolytically cleaved into 2 subunits, an extracellular subunit and a seven-transmembrane subunit.

The protein resides in the cell membrane. This Drosophila mojavensis (Fruit fly) protein is Latrophilin Cirl.